The chain runs to 307 residues: Voltage-dependent anion channel-forming protein alr2987 (307 aa).

Transmembrane regions (helical) follow at residues 19-39 (VIGA…LVTL), 47-67 (VSQP…LLVF), 209-229 (PLAY…LLPF), and 238-258 (WTGL…AIGL).

The protein belongs to the anion channel-forming bestrophin (TC 1.A.46) family.

It is found in the cell membrane. This is Voltage-dependent anion channel-forming protein alr2987 from Nostoc sp. (strain PCC 7120 / SAG 25.82 / UTEX 2576).